Reading from the N-terminus, the 206-residue chain is Glutathione S-transferase class-mu 28 kDa isozyme (206 aa).

Residues valine 1–glycine 81 enclose the GST N-terminal domain. Glutathione-binding positions include tyrosine 5, tyrosine 5–phenylalanine 6, arginine 11, tryptophan 36–lysine 40, leucine 48, isoleucine 50–valine 51, and glutamate 65–serine 66. One can recognise a GST C-terminal domain in the interval threonine 83–phenylalanine 206.

It belongs to the GST superfamily. Mu family. Homodimer.

It carries out the reaction RX + glutathione = an S-substituted glutathione + a halide anion + H(+). In terms of biological role, conjugation of reduced glutathione to a wide number of exogenous and endogenous hydrophobic electrophiles. GST isoenzymes appear to play a central role in the parasite detoxification system. Other functions are also suspected including a role in increasing the solubility of haematin in the parasite gut. The sequence is that of Glutathione S-transferase class-mu 28 kDa isozyme from Schistosoma japonicum (Blood fluke).